A 599-amino-acid polypeptide reads, in one-letter code: Protein ECM25 (599 aa).

The 179-residue stretch at 181 to 359 folds into the Rho-GAP domain; that stretch reads NRLTPLAIRQ…NLLDFFPEIA (179 aa). Disordered regions lie at residues 362–447, 468–495, and 543–563; these read ISSP…PLPI, ASSS…SSTD, and ELQE…KFSQ. Composition is skewed to low complexity over residues 363-373, 396-413, and 468-483; these read SSPPSSVSSSS, TLPR…TSPT, and ASSS…KTPS. Over residues 543-562 the composition is skewed to basic and acidic residues; the sequence is ELQEKKKKNETTSKTADKFS.

It is found in the cytoplasm. May be involved in cell wall organization and biogenesis. The sequence is that of Protein ECM25 (ECM25) from Saccharomyces cerevisiae (strain ATCC 204508 / S288c) (Baker's yeast).